The primary structure comprises 216 residues: Phosphatidylserine decarboxylase proenzyme (216 aa).

Ser-185 (schiff-base intermediate with substrate; via pyruvic acid) is an active-site residue. The residue at position 185 (Ser-185) is a Pyruvic acid (Ser); by autocatalysis.

It belongs to the phosphatidylserine decarboxylase family. PSD-A subfamily. In terms of assembly, heterodimer of a large membrane-associated beta subunit and a small pyruvoyl-containing alpha subunit. Pyruvate serves as cofactor. In terms of processing, is synthesized initially as an inactive proenzyme. Formation of the active enzyme involves a self-maturation process in which the active site pyruvoyl group is generated from an internal serine residue via an autocatalytic post-translational modification. Two non-identical subunits are generated from the proenzyme in this reaction, and the pyruvate is formed at the N-terminus of the alpha chain, which is derived from the carboxyl end of the proenzyme. The post-translation cleavage follows an unusual pathway, termed non-hydrolytic serinolysis, in which the side chain hydroxyl group of the serine supplies its oxygen atom to form the C-terminus of the beta chain, while the remainder of the serine residue undergoes an oxidative deamination to produce ammonia and the pyruvoyl prosthetic group on the alpha chain.

It is found in the cell membrane. The catalysed reaction is a 1,2-diacyl-sn-glycero-3-phospho-L-serine + H(+) = a 1,2-diacyl-sn-glycero-3-phosphoethanolamine + CO2. The protein operates within phospholipid metabolism; phosphatidylethanolamine biosynthesis; phosphatidylethanolamine from CDP-diacylglycerol: step 2/2. Catalyzes the formation of phosphatidylethanolamine (PtdEtn) from phosphatidylserine (PtdSer). The polypeptide is Phosphatidylserine decarboxylase proenzyme (Nitrosomonas europaea (strain ATCC 19718 / CIP 103999 / KCTC 2705 / NBRC 14298)).